The chain runs to 98 residues: NADH-ubiquinone oxidoreductase chain 4L (98 aa).

3 helical membrane-spanning segments follow: residues 1–21 (MPFI…GLLM), 29–49 (SLLC…LLCL), and 61–81 (MILL…LVMV).

Belongs to the complex I subunit 4L family. In terms of assembly, core subunit of respiratory chain NADH dehydrogenase (Complex I) which is composed of 45 different subunits.

The protein localises to the mitochondrion inner membrane. The enzyme catalyses a ubiquinone + NADH + 5 H(+)(in) = a ubiquinol + NAD(+) + 4 H(+)(out). Functionally, core subunit of the mitochondrial membrane respiratory chain NADH dehydrogenase (Complex I) which catalyzes electron transfer from NADH through the respiratory chain, using ubiquinone as an electron acceptor. Part of the enzyme membrane arm which is embedded in the lipid bilayer and involved in proton translocation. The chain is NADH-ubiquinone oxidoreductase chain 4L (MT-ND4L) from Dugong dugon (Dugong).